A 440-amino-acid chain; its full sequence is Protein dumpy-20 (440 aa).

The disordered stretch occupies residues 96 to 119; the sequence is ILSDPSLHGSNSSSSTSDVGSSVD. Low complexity predominate over residues 98–119; it reads SDPSLHGSNSSSSTSDVGSSVD. 2 BED-type zinc fingers span residues 137–186 and 350–399; these read PTEN…YQKV and KTEH…YNDV. Positions 156, 159, 174, 179, 369, 372, 387, and 392 each coordinate Zn(2+).

Its function is as follows. May be directly or indirectly involved in cuticle function. This Caenorhabditis elegans protein is Protein dumpy-20 (dpy-20).